Here is a 447-residue protein sequence, read N- to C-terminus: GTPase Der (447 aa).

EngA-type G domains are found at residues 2–166 and 183–358; these read YRVA…PEYE and IKVA…NQSW. GTP-binding positions include 8-15, 55-59, 118-121, 189-196, 236-240, and 301-304; these read GRPNVGKS, DTGGY, NKID, GKPNAGKS, and DTAGL. One can recognise a KH-like domain in the interval 359 to 443; that stretch reads KRVGTGQLNR…PIKLLLRGKE (85 aa).

This sequence belongs to the TRAFAC class TrmE-Era-EngA-EngB-Septin-like GTPase superfamily. EngA (Der) GTPase family. In terms of assembly, associates with the 50S ribosomal subunit.

Functionally, GTPase that plays an essential role in the late steps of ribosome biogenesis. The sequence is that of GTPase Der from Persephonella marina (strain DSM 14350 / EX-H1).